The primary structure comprises 293 residues: Autophagy protein 5 (293 aa).

A Glycyl lysine isopeptide (Lys-Gly) (interchain with G-Cter in ATG12) cross-link involves residue Lys149.

The protein belongs to the ATG5 family. As to quaternary structure, conjugated with ATG12. Conjugated to ATG12; which is essential for autophagy.

The protein resides in the preautophagosomal structure membrane. In terms of biological role, involved in cytoplasm to vacuole transport (Cvt) and autophagic vesicle formation. Autophagy is essential for maintenance of amino acid levels and protein synthesis under nitrogen starvation. Required for selective autophagic degradation of the nucleus (nucleophagy). Also required for mitophagy, which eliminates defective or superfluous mitochondria in order to fulfill cellular energy requirements and prevent excess ROS production. Conjugation with ATG12, through a ubiquitin-like conjugating system involving ATG7 as an E1-like activating enzyme and ATG10 as an E2-like conjugating enzyme, is essential for its function. The ATG12-ATG5 conjugate acts as an E3-like enzyme which is required for lipidation of ATG8 and ATG8 association to the vesicle membranes. This is Autophagy protein 5 (ATG5) from Eremothecium gossypii (strain ATCC 10895 / CBS 109.51 / FGSC 9923 / NRRL Y-1056) (Yeast).